Consider the following 1171-residue polypeptide: ATP-dependent helicase/deoxyribonuclease subunit B (1171 aa).

One can recognise a UvrD-like helicase ATP-binding domain in the interval 1–343 (MSLRFVIGRA…LVAEENYRYR (343 aa)). 8-15 (GRAGSGKS) lines the ATP pocket. The 307-residue stretch at 281 to 587 (MEQPRFHSPA…QFANIPPSLD (307 aa)) folds into the UvrD-like helicase C-terminal domain. [4Fe-4S] cluster contacts are provided by Cys-805, Cys-1129, Cys-1132, and Cys-1138.

This sequence belongs to the helicase family. AddB/RexB type 1 subfamily. In terms of assembly, heterodimer of AddA and AddB. Mg(2+) serves as cofactor. [4Fe-4S] cluster is required as a cofactor.

Its function is as follows. The heterodimer acts as both an ATP-dependent DNA helicase and an ATP-dependent, dual-direction single-stranded exonuclease. Recognizes the chi site generating a DNA molecule suitable for the initiation of homologous recombination. The AddB subunit has 5' -&gt; 3' nuclease activity but not helicase activity. The sequence is that of ATP-dependent helicase/deoxyribonuclease subunit B from Bacillus thuringiensis (strain Al Hakam).